Here is a 256-residue protein sequence, read N- to C-terminus: uncharacterized protein (256 aa).

Residues 1–22 (MGYLKRIGMCISLLIVIIFVTS) form the signal peptide. C23 carries the N-palmitoyl cysteine lipid modification. C23 carries S-diacylglycerol cysteine lipidation.

Belongs to the staphylococcal tandem lipoprotein family.

The protein resides in the cell membrane. This is an uncharacterized protein from Staphylococcus aureus (strain MRSA252).